Reading from the N-terminus, the 387-residue chain is Ferrochelatase (387 aa).

The Fe cation site is built by H196 and E277.

The protein belongs to the ferrochelatase family.

It localises to the cytoplasm. It catalyses the reaction heme b + 2 H(+) = protoporphyrin IX + Fe(2+). It functions in the pathway porphyrin-containing compound metabolism; protoheme biosynthesis; protoheme from protoporphyrin-IX: step 1/1. Its function is as follows. Catalyzes the ferrous insertion into protoporphyrin IX. This Rippkaea orientalis (strain PCC 8801 / RF-1) (Cyanothece sp. (strain PCC 8801)) protein is Ferrochelatase.